The primary structure comprises 348 residues: Myricetin O-methyltransferase (348 aa).

Methionine 1 is subject to N-acetylmethionine. The S-adenosyl-L-methionine site is built by glycine 189, aspartate 212, aspartate 232, methionine 233, and lysine 246. Residue histidine 250 is the Proton acceptor of the active site.

In terms of processing, the N-terminus is blocked.

The catalysed reaction is S-adenosyl-L-methionine + a 3'-hydroxyflavonoid = S-adenosyl-L-homocysteine + a 3'-methoxyflavonoid.. It catalyses the reaction S-adenosyl-L-methionine + a 5'-hydroxy-3'-methoxyflavonoid = S-adenosyl-L-homocysteine + a 3',5'-dimethoxyflavonoid.. Functionally, methylates myricetin and dihydromyricetin at 2 sites. Inactive towards 16-hydroxytabersonine, the phenylpropanoids 5-hydroxyferulate, caffeate and their CoA-esters, flavones and flavanones possessing 2 or 3 B-ring hydroxyl groups. This Catharanthus roseus (Madagascar periwinkle) protein is Myricetin O-methyltransferase.